Reading from the N-terminus, the 99-residue chain is Protein Tat (99 aa).

A disordered region spans residues 1 to 20 (MEPVDPNIEPWNQPGSQPKT). The tract at residues 1-24 (MEPVDPNIEPWNQPGSQPKTACNQ) is interaction with human CREBBP. The tract at residues 1–48 (MEPVDPNIEPWNQPGSQPKTACNQCYCKKCCYHCQLCFLQKGLGICYG) is transactivation. Zn(2+) is bound by residues cysteine 22, cysteine 25, and cysteine 27. The interval 22-37 (CNQCYCKKCCYHCQLC) is cysteine-rich. Lysine 28 carries the post-translational modification N6-acetyllysine; by host PCAF. Zn(2+) is bound by residues cysteine 30, histidine 33, cysteine 34, and cysteine 37. Residues 38–48 (FLQKGLGICYG) form a core region. Positions 49-57 (REKRRQRTT) match the Nuclear localization signal, RNA-binding (TAR), and protein transduction motif. The segment at 49–86 (REKRRQRTTTPYASKNHKDPIPKQPLPQARGDPTGPKE) is interaction with the host capping enzyme RNGTT. Residue lysine 51 is modified to N6-acetyllysine; by host EP300 and GCN5L2. Asymmetric dimethylarginine; by host PRMT6 is present on residues arginine 52 and arginine 53. The disordered stretch occupies residues 54-99 (QRTTTPYASKNHKDPIPKQPLPQARGDPTGPKESKKEVESKTKTDP). Lysine 71 is covalently cross-linked (Glycyl lysine isopeptide (Lys-Gly) (interchain with G-Cter in ubiquitin)). The Cell attachment site motif lies at 78-80 (RGD). Positions 83–99 (GPKESKKEVESKTKTDP) are enriched in basic and acidic residues.

It belongs to the lentiviruses Tat family. As to quaternary structure, interacts with host CCNT1. Associates with the P-TEFb complex composed at least of Tat, P-TEFb (CDK9 and CCNT1), TAR RNA, RNA Pol II. Recruits the HATs CREBBP, TAF1/TFIID, EP300, PCAF and GCN5L2. Interacts with host KAT5/Tip60; this interaction targets the latter to degradation. Interacts with the host deacetylase SIRT1. Interacts with host capping enzyme RNGTT; this interaction stimulates RNGTT. Binds to host KDR, and to the host integrins ITGAV/ITGB3 and ITGA5/ITGB1. Interacts with host KPNB1/importin beta-1 without previous binding to KPNA1/importin alpha-1. Interacts with EIF2AK2. Interacts with host nucleosome assembly protein NAP1L1; this interaction may be required for the transport of Tat within the nucleus, since the two proteins interact at the nuclear rim. Interacts with host C1QBP/SF2P32; this interaction involves lysine-acetylated Tat. Interacts with the host chemokine receptors CCR2, CCR3 and CXCR4. Interacts with host DPP4/CD26; this interaction may trigger an anti-proliferative effect. Interacts with host LDLR. Interacts with the host extracellular matrix metalloproteinase MMP1. Interacts with host PRMT6; this interaction mediates Tat's methylation. Interacts with, and is ubiquitinated by MDM2/Hdm2. Interacts with host PSMC3 and HTATIP2. Interacts with STAB1; this interaction may overcome SATB1-mediated repression of IL2 and IL2RA (interleukin) in T cells by binding to the same domain than HDAC1. Interacts (when acetylated) with human CDK13, thereby increasing HIV-1 mRNA splicing and promoting the production of the doubly spliced HIV-1 protein Nef. Interacts with host TBP; this interaction modulates the activity of transcriptional pre-initiation complex. Interacts with host RELA. Interacts with host PLSCR1; this interaction negatively regulates Tat transactivation activity by altering its subcellular distribution. Post-translationally, asymmetrical arginine methylation by host PRMT6 seems to diminish the transactivation capacity of Tat and affects the interaction with host CCNT1. Acetylation by EP300, CREBBP, GCN5L2/GCN5 and PCAF regulates the transactivation activity of Tat. EP300-mediated acetylation of Lys-50 promotes dissociation of Tat from the TAR RNA through the competitive binding to PCAF's bromodomain. In addition, the non-acetylated Tat's N-terminus can also interact with PCAF. PCAF-mediated acetylation of Lys-28 enhances Tat's binding to CCNT1. Lys-50 is deacetylated by SIRT1. In terms of processing, polyubiquitination by host MDM2 does not target Tat to degradation, but activates its transactivation function and fosters interaction with CCNT1 and TAR RNA. Post-translationally, phosphorylated by EIF2AK2 on serine and threonine residues adjacent to the basic region important for TAR RNA binding and function. Phosphorylation of Tat by EIF2AK2 is dependent on the prior activation of EIF2AK2 by dsRNA.

The protein resides in the host nucleus. It is found in the host nucleolus. The protein localises to the host cytoplasm. It localises to the secreted. Its function is as follows. Transcriptional activator that increases RNA Pol II processivity, thereby increasing the level of full-length viral transcripts. Recognizes a hairpin structure at the 5'-LTR of the nascent viral mRNAs referred to as the transactivation responsive RNA element (TAR) and recruits the cyclin T1-CDK9 complex (P-TEFb complex) that will in turn hyperphosphorylate the RNA polymerase II to allow efficient elongation. The CDK9 component of P-TEFb and other Tat-activated kinases hyperphosphorylate the C-terminus of RNA Pol II that becomes stabilized and much more processive. Other factors such as HTATSF1/Tat-SF1, SUPT5H/SPT5, and HTATIP2 are also important for Tat's function. Besides its effect on RNA Pol II processivity, Tat induces chromatin remodeling of proviral genes by recruiting the histone acetyltransferases (HATs) CREBBP, EP300 and PCAF to the chromatin. This also contributes to the increase in proviral transcription rate, especially when the provirus integrates in transcriptionally silent region of the host genome. To ensure maximal activation of the LTR, Tat mediates nuclear translocation of NF-kappa-B by interacting with host RELA. Through its interaction with host TBP, Tat may also modulate transcription initiation. Tat can reactivate a latently infected cell by penetrating in it and transactivating its LTR promoter. In the cytoplasm, Tat is thought to act as a translational activator of HIV-1 mRNAs. Extracellular circulating Tat can be endocytosed by surrounding uninfected cells via the binding to several surface receptors such as CD26, CXCR4, heparan sulfate proteoglycans (HSPG) or LDLR. Neurons are rarely infected, but they internalize Tat via their LDLR. Through its interaction with nuclear HATs, Tat is potentially able to control the acetylation-dependent cellular gene expression. Modulates the expression of many cellular genes involved in cell survival, proliferation or in coding for cytokines or cytokine receptors. Tat plays a role in T-cell and neurons apoptosis. Tat induced neurotoxicity and apoptosis probably contribute to neuroAIDS. Circulating Tat also acts as a chemokine-like and/or growth factor-like molecule that binds to specific receptors on the surface of the cells, affecting many cellular pathways. In the vascular system, Tat binds to ITGAV/ITGB3 and ITGA5/ITGB1 integrins dimers at the surface of endothelial cells and competes with bFGF for heparin-binding sites, leading to an excess of soluble bFGF. In Homo sapiens (Human), this protein is Protein Tat.